Here is a 272-residue protein sequence, read N- to C-terminus: HMP-PP phosphatase (272 aa).

Asp8 (nucleophile) is an active-site residue. Mg(2+) contacts are provided by Asp8, Asp10, and Asp212.

Belongs to the HAD-like hydrolase superfamily. Cof family. The cofactor is Mg(2+).

It catalyses the reaction 4-amino-2-methyl-5-(diphosphooxymethyl)pyrimidine + H2O = 4-amino-2-methyl-5-(phosphooxymethyl)pyrimidine + phosphate + H(+). Its function is as follows. Catalyzes the hydrolysis of 4-amino-2-methyl-5-hydroxymethylpyrimidine pyrophosphate (HMP-PP) to 4-amino-2-methyl-5-hydroxymethylpyrimidine phosphate (HMP-P). In Citrobacter koseri (strain ATCC BAA-895 / CDC 4225-83 / SGSC4696), this protein is HMP-PP phosphatase.